Reading from the N-terminus, the 231-residue chain is MPLRIILLGLPGAGKGTQADFIAKHLDIPKISTGDMLRAAVKAKTPLGLEVKKIMESGGLVSDEIMIALVKERVKLPDCHKGYLLDGFPRTLAQADALNAAAIKIDLVIEIDVPEEEIIERMTGRLIHPASGRTYHRRYNPPKVADKDDVTGEPLIQRADDREETVRHRLAVYRKQTSPLSDYYAQWEKSGDPQAPKYFRISGLGSMEEVRERILQVFEAYDPRDSGNLEH.

12–17 (GAGKGT) contributes to the ATP binding site. Residues 32-61 (STGDMLRAAVKAKTPLGLEVKKIMESGGLV) form an NMP region. AMP-binding positions include Thr-33, Arg-38, 59 to 61 (GLV), 87 to 90 (GFPR), and Gln-94. The segment at 124-161 (GRLIHPASGRTYHRRYNPPKVADKDDVTGEPLIQRADD) is LID. Residues Arg-125 and 134-135 (TY) each bind ATP. Residues Arg-158 and Arg-169 each coordinate AMP. Gly-205 provides a ligand contact to ATP.

The protein belongs to the adenylate kinase family. In terms of assembly, monomer.

The protein localises to the cytoplasm. It catalyses the reaction AMP + ATP = 2 ADP. It functions in the pathway purine metabolism; AMP biosynthesis via salvage pathway; AMP from ADP: step 1/1. Functionally, catalyzes the reversible transfer of the terminal phosphate group between ATP and AMP. Plays an important role in cellular energy homeostasis and in adenine nucleotide metabolism. The sequence is that of Adenylate kinase from Coxiella burnetii (strain CbuK_Q154) (Coxiella burnetii (strain Q154)).